The chain runs to 157 residues: RNA pyrophosphohydrolase (157 aa).

The 144-residue stretch at 6–149 (SYRPNVAAVI…KRKVYRRVID (144 aa)) folds into the Nudix hydrolase domain. Positions 43–64 (GGIDEGETPEDALYRELLEEIG) match the Nudix box motif.

The protein belongs to the Nudix hydrolase family. RppH subfamily. The cofactor is a divalent metal cation.

Functionally, accelerates the degradation of transcripts by removing pyrophosphate from the 5'-end of triphosphorylated RNA, leading to a more labile monophosphorylated state that can stimulate subsequent ribonuclease cleavage. This is RNA pyrophosphohydrolase from Sulfurovum sp. (strain NBC37-1).